The primary structure comprises 168 residues: RNA pyrophosphohydrolase (168 aa).

A Nudix hydrolase domain is found at 8-160 (PYRPCVGLAI…KRQVYERVAR (153 aa)). The Nudix box signature appears at 47–68 (GGIDKGEEPYEAALRELYEETS).

The protein belongs to the Nudix hydrolase family. RppH subfamily. A divalent metal cation is required as a cofactor.

Accelerates the degradation of transcripts by removing pyrophosphate from the 5'-end of triphosphorylated RNA, leading to a more labile monophosphorylated state that can stimulate subsequent ribonuclease cleavage. The protein is RNA pyrophosphohydrolase of Azorhizobium caulinodans (strain ATCC 43989 / DSM 5975 / JCM 20966 / LMG 6465 / NBRC 14845 / NCIMB 13405 / ORS 571).